The chain runs to 124 residues: Small ribosomal subunit protein bS6 (124 aa).

Positions 96 to 124 (ETAPSPMMKEVQREEARKAAQTTTEGQAA) are disordered. The span at 115 to 124 (AQTTTEGQAA) shows a compositional bias: polar residues.

The protein belongs to the bacterial ribosomal protein bS6 family.

Its function is as follows. Binds together with bS18 to 16S ribosomal RNA. The sequence is that of Small ribosomal subunit protein bS6 from Cupriavidus pinatubonensis (strain JMP 134 / LMG 1197) (Cupriavidus necator (strain JMP 134)).